Here is a 172-residue protein sequence, read N- to C-terminus: 3-hydroxydecanoyl-[acyl-carrier-protein] dehydratase (172 aa).

His71 is a catalytic residue.

Belongs to the thioester dehydratase family. FabA subfamily. As to quaternary structure, homodimer.

The protein resides in the cytoplasm. It carries out the reaction a (3R)-hydroxyacyl-[ACP] = a (2E)-enoyl-[ACP] + H2O. It catalyses the reaction (3R)-hydroxydecanoyl-[ACP] = (2E)-decenoyl-[ACP] + H2O. The enzyme catalyses (2E)-decenoyl-[ACP] = (3Z)-decenoyl-[ACP]. Its pathway is lipid metabolism; fatty acid biosynthesis. Functionally, necessary for the introduction of cis unsaturation into fatty acids. Catalyzes the dehydration of (3R)-3-hydroxydecanoyl-ACP to E-(2)-decenoyl-ACP and then its isomerization to Z-(3)-decenoyl-ACP. Can catalyze the dehydratase reaction for beta-hydroxyacyl-ACPs with saturated chain lengths up to 16:0, being most active on intermediate chain length. The sequence is that of 3-hydroxydecanoyl-[acyl-carrier-protein] dehydratase from Klebsiella pneumoniae (strain 342).